The following is a 70-amino-acid chain: Conotoxin elongated-tx3a-a (70 aa).

The signal sequence occupies residues 1 to 24 (MLKMGVVLFIFLVLFPLATLQLDA). A propeptide spanning residues 25 to 44 (DQPVERYAENKQLLSPDERR) is cleaved from the precursor. Cystine bridges form between Cys-55–Cys-68, Cys-56–Cys-66, and Cys-61–Cys-69. Residue Trp-58 is modified to 6'-bromotryptophan; partial. The residue at position 69 (Cys-69) is a Cysteine amide; partial.

It belongs to the conotoxin M superfamily. Two short peptides are produced from this precursor; Conotoxin tx3a-b is amidated at Cys-69 (but has no bromotryptophan), whereas conotoxin tx3a-a has an unmodified Gly-70 and a bromotryptophan. Two elongated peptides are also produced; Conotoxin elongated-tx3a-b is amidated at Cys-69 (but has no bromotryptophan), whereas conotoxin elongated tx3a-a has an unmodified Gly-70 (but has no bromotryptophan). Post-translationally, ju et al. (2022) describe a disulfide connectivity (C55-C61; C56-C69; C66-C68) that differs from that of Han and colleagues (2006), McDougal et al. (2008), and Ueberheide et al. (2009). In terms of tissue distribution, expressed by the venom duct. Is present in all duct parts with a highest content in part 2 (proximal of the venom bulb) and then decreases in concentration toward the end of the duct.

It is found in the secreted. Intracranial injection into mice causes scratching and hyperactivity. In vitro, inhibits proliferation of the mice ovarian cancer cells ID8. The protein is Conotoxin elongated-tx3a-a of Conus textile (Cloth-of-gold cone).